The chain runs to 66 residues: Beta-mammal toxin Cv5 (66 aa).

The 66-residue stretch at 1–66 folds into the LCN-type CS-alpha/beta domain; sequence KEGYIVNYYD…VWPLPKKKCN (66 aa). Cystine bridges form between cysteine 12-cysteine 65, cysteine 16-cysteine 41, cysteine 25-cysteine 46, and cysteine 29-cysteine 48.

In terms of tissue distribution, expressed by the venom gland.

The protein localises to the secreted. With respect to regulation, is susceptible to be neutralized by human antibodies scFvs 10FG2 and HV. Functionally, beta toxins bind voltage-independently at site-4 of sodium channels (Nav) and reduces peak current and shifts the voltage of activation toward more negative potentials thereby affecting sodium channel activation and promoting spontaneous and repetitive firing. This toxin is moderately toxic to mice. The polypeptide is Beta-mammal toxin Cv5 (Centruroides villegasi (Scorpion)).